Here is a 344-residue protein sequence, read N- to C-terminus: 2-aminoethylphosphonate--pyruvate transaminase (344 aa).

K194 carries the N6-(pyridoxal phosphate)lysine modification.

The protein belongs to the class-V pyridoxal-phosphate-dependent aminotransferase family. PhnW subfamily. In terms of assembly, homodimer. Requires pyridoxal 5'-phosphate as cofactor.

It carries out the reaction (2-aminoethyl)phosphonate + pyruvate = phosphonoacetaldehyde + L-alanine. In terms of biological role, involved in phosphonate degradation. The protein is 2-aminoethylphosphonate--pyruvate transaminase of Bacillus cereus.